The chain runs to 373 residues: Lipoyl synthase (373 aa).

A disordered region spans residues 12–36; the sequence is HVVSNDHPSSSPLQPGVKQSGEDKI. Cys81, Cys86, Cys92, Cys107, Cys111, Cys114, and Ser323 together coordinate [4Fe-4S] cluster. The Radical SAM core domain maps to 93–312; sequence FSHGTATFMI…EEYGMALGFS (220 aa). The disordered stretch occupies residues 346-373; it reads PAVSSTEHRERHTIASKSASKTESIPHR. Positions 360–373 are enriched in polar residues; the sequence is ASKSASKTESIPHR.

This sequence belongs to the radical SAM superfamily. Lipoyl synthase family. The cofactor is [4Fe-4S] cluster.

It localises to the cytoplasm. The catalysed reaction is [[Fe-S] cluster scaffold protein carrying a second [4Fe-4S](2+) cluster] + N(6)-octanoyl-L-lysyl-[protein] + 2 oxidized [2Fe-2S]-[ferredoxin] + 2 S-adenosyl-L-methionine + 4 H(+) = [[Fe-S] cluster scaffold protein] + N(6)-[(R)-dihydrolipoyl]-L-lysyl-[protein] + 4 Fe(3+) + 2 hydrogen sulfide + 2 5'-deoxyadenosine + 2 L-methionine + 2 reduced [2Fe-2S]-[ferredoxin]. It functions in the pathway protein modification; protein lipoylation via endogenous pathway; protein N(6)-(lipoyl)lysine from octanoyl-[acyl-carrier-protein]: step 2/2. Its function is as follows. Catalyzes the radical-mediated insertion of two sulfur atoms into the C-6 and C-8 positions of the octanoyl moiety bound to the lipoyl domains of lipoate-dependent enzymes, thereby converting the octanoylated domains into lipoylated derivatives. This is Lipoyl synthase from Xylella fastidiosa (strain M12).